Reading from the N-terminus, the 78-residue chain is Ferredoxin oxidoreductase 2 subunit ForD (78 aa).

4Fe-4S ferredoxin-type domains lie at 3–35 and 37–66; these read FVAD…FKAS and NSAW…HCIE. The [4Fe-4S] cluster site is built by cysteine 12, cysteine 17, cysteine 20, cysteine 24, cysteine 46, cysteine 49, cysteine 52, and cysteine 56.

In terms of assembly, heterotetramer of one alpha, one beta, one delta and one gamma chain. It depends on [4Fe-4S] cluster as a cofactor.

In Aquifex aeolicus (strain VF5), this protein is Ferredoxin oxidoreductase 2 subunit ForD (forD2).